Here is a 1044-residue protein sequence, read N- to C-terminus: Multiple epidermal growth factor-like domains protein 11 (1044 aa).

The signal sequence occupies residues 1-19 (MVLSLTGLIAFSFLQATLA). Residues 20 to 848 (LNPEDPNVCS…SPALGAERHS (829 aa)) lie on the Extracellular side of the membrane. In terms of domain architecture, EMI spans 24–101 (DPNVCSHWES…YYESGDFCIP (78 aa)). 14 disulfides stabilise this stretch: cysteine 28–cysteine 89, cysteine 54–cysteine 63, cysteine 88–cysteine 99, cysteine 103–cysteine 118, cysteine 120–cysteine 129, cysteine 146–cysteine 154, cysteine 148–cysteine 161, cysteine 163–cysteine 172, cysteine 185–cysteine 197, cysteine 191–cysteine 204, cysteine 206–cysteine 215, cysteine 228–cysteine 240, cysteine 234–cysteine 247, and cysteine 249–cysteine 258. EGF-like domains lie at 95–130 (SGDFCIPLCTEECVHGRCVSPDTCHCEPGWGGPDCS), 143–173 (SNRCQCQNGALCNPITGACVCAAGFRGWRCE), 181–216 (HGKGCQLPCQCRHGASCDPRAGECLCAPGYTGVYCE), 224–259 (HGAHCELRCPCQNGGTCHHITGECACPPGWTGAVCA), 267–302 (FGQNCSQDCPCHHGGQCDHVTGQCHCTAGYMGDRCQ), 310–345 (FGFQCSQHCDCHNGGQCSPTTGACECEPGYKGPRCQ), 399–434 (YGDGCQLPCTCQNGADCHSITGGCTCAPGFMGEVCA), 442–477 (YGPNCSSICSCNNGGTCSPVDGSCTCKEGWQGLDCT), and 490–520 (NESCTCANGAACSPIDGSCSCTPGWLGDTCE). N-linked (GlcNAc...) asparagine glycosylation occurs at asparagine 270. 15 disulfides stabilise this stretch: cysteine 271–cysteine 283, cysteine 277–cysteine 290, cysteine 292–cysteine 301, cysteine 314–cysteine 326, cysteine 320–cysteine 333, cysteine 335–cysteine 344, cysteine 403–cysteine 415, cysteine 409–cysteine 422, cysteine 424–cysteine 433, cysteine 446–cysteine 458, cysteine 452–cysteine 465, cysteine 467–cysteine 476, cysteine 493–cysteine 501, cysteine 495–cysteine 508, and cysteine 510–cysteine 519. An N-linked (GlcNAc...) asparagine glycan is attached at asparagine 531. EGF-like domains are found at residues 571–606 (WGPNCSVSCSCENGGSCSPEDGSCECAPGFRGPLCQ), 659–694 (FGQDCAQLCSCANNGTCSPIDGSCQCFPGWIGKDCS), 707–737 (FHACSCHNGASCSAEDGACHCTPGWTGLFCT), 750–780 (GRVCQCQNGASCDHISGKCTCRTGFTGQHCE), and 788–823 (FGYGCQQLCECMNNSTCDHVTGTCYCSPGFKGIRCD). Cystine bridges form between cysteine 575-cysteine 587, cysteine 581-cysteine 594, cysteine 596-cysteine 605, cysteine 663-cysteine 675, cysteine 669-cysteine 682, cysteine 684-cysteine 693, cysteine 710-cysteine 718, cysteine 712-cysteine 725, cysteine 727-cysteine 736, cysteine 753-cysteine 761, cysteine 755-cysteine 768, cysteine 770-cysteine 779, cysteine 792-cysteine 804, cysteine 798-cysteine 811, and cysteine 813-cysteine 822. The chain crosses the membrane as a helical span at residues 849–869 (VGAVTGIMLLLFLIVVLLGLF). The Cytoplasmic segment spans residues 870–1044 (AWHRRRQKEK…ANGPSQDKQS (175 aa)). The tract at residues 1023 to 1044 (GHYDLLPVRQSPANGPSQDKQS) is disordered. Positions 1033-1044 (SPANGPSQDKQS) are enriched in polar residues.

The protein belongs to the MEGF family. As to quaternary structure, homomer. Does not interact with MEGF10.

The protein localises to the cell membrane. It is found in the basolateral cell membrane. Its function is as follows. May regulate the mosaic spacing of specific neuron subtypes in the retina through homotypic retinal neuron repulsion. Mosaics provide a mechanism to distribute each cell type evenly across the retina, ensuring that all parts of the visual field have access to a full set of processing elements. The polypeptide is Multiple epidermal growth factor-like domains protein 11 (MEGF11) (Homo sapiens (Human)).